A 300-amino-acid chain; its full sequence is Protein N-terminal and lysine N-methyltransferase EFM7 (300 aa).

Residues Trp75, 101-103 (GAG), Asp123, Trp156, and Ser179 contribute to the S-adenosyl-L-methionine site.

The protein belongs to the class I-like SAM-binding methyltransferase superfamily. EFM7 family.

It localises to the cytoplasm. Its function is as follows. S-adenosyl-L-methionine-dependent protein methyltransferase that trimethylates the N-terminal glycine 'Gly-2' of elongation factor 1-alpha, before also catalyzing the mono- and dimethylation of 'Lys-3'. The protein is Protein N-terminal and lysine N-methyltransferase EFM7 of Cryptococcus neoformans var. neoformans serotype D (strain JEC21 / ATCC MYA-565) (Filobasidiella neoformans).